We begin with the raw amino-acid sequence, 354 residues long: Guanine nucleotide-binding protein G(i) subunit alpha-1 (354 aa).

Residue glycine 2 is the site of N-myristoyl glycine attachment. A lipid anchor (S-palmitoyl cysteine) is attached at cysteine 3. The G-alpha domain maps to 32–354; it reads REVKLLLLGA…KNNLKDCGLF (323 aa). The tract at residues 35 to 48 is G1 motif; that stretch reads KLLLLGAGESGKST. Residues 43–48, 150–151, and 175–178 contribute to the GTP site; these read ESGKST, DS, and LRTR. A Mg(2+)-binding site is contributed by serine 47. The tract at residues 173–181 is G2 motif; that stretch reads DVLRTRVKT. Position 181 (threonine 181) interacts with Mg(2+). Positions 196 to 205 are G3 motif; it reads FKMFDVGGQR. Residues 200–204, 269–272, and alanine 326 each bind GTP; these read DVGGQ and NKKD. A G4 motif region spans residues 265–272; it reads ILFLNKKD. The interval 324–329 is G5 motif; the sequence is TCATDT.

It belongs to the G-alpha family. G(i/o/t/z) subfamily. As to quaternary structure, heterotrimeric G proteins are composed of 3 units; alpha, beta and gamma. The alpha chain contains the guanine nucleotide binding site. Part of a spindle orientation complex. Identified in complex with the beta subunit GNB1 and the gamma subunit GNG1. Identified in complex with the beta subunit GNB1 and the gamma subunit GNG2. GTP binding causes dissociation of the heterotrimer, liberating the individual subunits so that they can interact with downstream effector proteins. In terms of processing, myristoylation at Gly-2 is required for membrane anchoring before palmitoylation. Post-translationally, palmitoylation at Cys-3 varies with membrane lipid composition.

The protein localises to the nucleus. It is found in the cytoplasm. Its subcellular location is the cell membrane. The protein resides in the cytoskeleton. It localises to the microtubule organizing center. The protein localises to the centrosome. It is found in the cell cortex. Its subcellular location is the membrane. The catalysed reaction is GTP + H2O = GDP + phosphate + H(+). Functionally, guanine nucleotide-binding proteins (G proteins) function as transducers downstream of G protein-coupled receptors (GPCRs) in numerous signaling cascades. The alpha chain contains the guanine nucleotide binding site and alternates between an active, GTP-bound state and an inactive, GDP-bound state. Signaling by an activated GPCR promotes GDP release and GTP binding. The alpha subunit has a low GTPase activity that converts bound GTP to GDP, thereby terminating the signal. Both GDP release and GTP hydrolysis are modulated by numerous regulatory proteins. Signaling is mediated via effector proteins, such as adenylate cyclase. Inhibits adenylate cyclase activity, leading to decreased intracellular cAMP levels. Required for cortical dynein-dynactin complex recruitment during metaphase. This is Guanine nucleotide-binding protein G(i) subunit alpha-1 (gnai1) from Oryzias latipes (Japanese rice fish).